We begin with the raw amino-acid sequence, 204 residues long: ATP synthase subunit b 2 (204 aa).

Residues 8 to 28 (AQSSTTEGAEAHDAAAAGEVH) are disordered. The chain crosses the membrane as a helical span at residues 56–76 (LLWLAITFGLFYLLMSKVIIP).

Belongs to the ATPase B chain family. In terms of assembly, F-type ATPases have 2 components, F(1) - the catalytic core - and F(0) - the membrane proton channel. F(1) has five subunits: alpha(3), beta(3), gamma(1), delta(1), epsilon(1). F(0) has three main subunits: a(1), b(2) and c(10-14). The alpha and beta chains form an alternating ring which encloses part of the gamma chain. F(1) is attached to F(0) by a central stalk formed by the gamma and epsilon chains, while a peripheral stalk is formed by the delta and b chains.

It localises to the cell inner membrane. Its function is as follows. F(1)F(0) ATP synthase produces ATP from ADP in the presence of a proton or sodium gradient. F-type ATPases consist of two structural domains, F(1) containing the extramembraneous catalytic core and F(0) containing the membrane proton channel, linked together by a central stalk and a peripheral stalk. During catalysis, ATP synthesis in the catalytic domain of F(1) is coupled via a rotary mechanism of the central stalk subunits to proton translocation. Component of the F(0) channel, it forms part of the peripheral stalk, linking F(1) to F(0). The b'-subunit is a diverged and duplicated form of b found in plants and photosynthetic bacteria. This chain is ATP synthase subunit b 2 (atpF2), found in Rhizobium meliloti (strain 1021) (Ensifer meliloti).